The following is a 163-amino-acid chain: Shikimate kinase (163 aa).

10 to 15 provides a ligand contact to ATP; it reads GVGKSS. A Mg(2+)-binding site is contributed by Ser14. Asp28, Arg52, and Gly75 together coordinate substrate. Arg116 provides a ligand contact to ATP. Residue Arg134 coordinates substrate. Residue Arg151 coordinates ATP.

Belongs to the shikimate kinase family. In terms of assembly, monomer. Requires Mg(2+) as cofactor.

It localises to the cytoplasm. It catalyses the reaction shikimate + ATP = 3-phosphoshikimate + ADP + H(+). It participates in metabolic intermediate biosynthesis; chorismate biosynthesis; chorismate from D-erythrose 4-phosphate and phosphoenolpyruvate: step 5/7. Catalyzes the specific phosphorylation of the 3-hydroxyl group of shikimic acid using ATP as a cosubstrate. In Streptococcus thermophilus (strain ATCC BAA-491 / LMD-9), this protein is Shikimate kinase.